A 179-amino-acid polypeptide reads, in one-letter code: ATP synthase subunit delta (179 aa).

It belongs to the ATPase delta chain family. As to quaternary structure, F-type ATPases have 2 components, F(1) - the catalytic core - and F(0) - the membrane proton channel. F(1) has five subunits: alpha(3), beta(3), gamma(1), delta(1), epsilon(1). F(0) has three main subunits: a(1), b(2) and c(10-14). The alpha and beta chains form an alternating ring which encloses part of the gamma chain. F(1) is attached to F(0) by a central stalk formed by the gamma and epsilon chains, while a peripheral stalk is formed by the delta and b chains.

It is found in the cell membrane. Its function is as follows. F(1)F(0) ATP synthase produces ATP from ADP in the presence of a proton or sodium gradient. F-type ATPases consist of two structural domains, F(1) containing the extramembraneous catalytic core and F(0) containing the membrane proton channel, linked together by a central stalk and a peripheral stalk. During catalysis, ATP synthesis in the catalytic domain of F(1) is coupled via a rotary mechanism of the central stalk subunits to proton translocation. Functionally, this protein is part of the stalk that links CF(0) to CF(1). It either transmits conformational changes from CF(0) to CF(1) or is implicated in proton conduction. This chain is ATP synthase subunit delta, found in Staphylococcus epidermidis (strain ATCC 35984 / DSM 28319 / BCRC 17069 / CCUG 31568 / BM 3577 / RP62A).